We begin with the raw amino-acid sequence, 940 residues long: Isoleucine--tRNA ligase (940 aa).

The short motif at 58–68 (PYANGAIHIGH) is the 'HIGH' region element. Glu564 is an L-isoleucyl-5'-AMP binding site. Positions 605–609 (KMSKS) match the 'KMSKS' region motif. Lys608 contributes to the ATP binding site. Zn(2+) is bound by residues Cys903, Cys906, Cys923, and Cys926.

This sequence belongs to the class-I aminoacyl-tRNA synthetase family. IleS type 1 subfamily. In terms of assembly, monomer. Requires Zn(2+) as cofactor.

It localises to the cytoplasm. The enzyme catalyses tRNA(Ile) + L-isoleucine + ATP = L-isoleucyl-tRNA(Ile) + AMP + diphosphate. Functionally, catalyzes the attachment of isoleucine to tRNA(Ile). As IleRS can inadvertently accommodate and process structurally similar amino acids such as valine, to avoid such errors it has two additional distinct tRNA(Ile)-dependent editing activities. One activity is designated as 'pretransfer' editing and involves the hydrolysis of activated Val-AMP. The other activity is designated 'posttransfer' editing and involves deacylation of mischarged Val-tRNA(Ile). The chain is Isoleucine--tRNA ligase from Nitrosococcus oceani (strain ATCC 19707 / BCRC 17464 / JCM 30415 / NCIMB 11848 / C-107).